A 280-amino-acid polypeptide reads, in one-letter code: Nucleotide-binding protein Dgeo_0723 (280 aa).

An ATP-binding site is contributed by 8-15; the sequence is GLSGSGKS. 57-60 contributes to the GTP binding site; that stretch reads DART.

Belongs to the RapZ-like family.

Displays ATPase and GTPase activities. This chain is Nucleotide-binding protein Dgeo_0723, found in Deinococcus geothermalis (strain DSM 11300 / CIP 105573 / AG-3a).